Reading from the N-terminus, the 883-residue chain is Translation initiation factor IF-2 (883 aa).

Residues 118–261 (VARESEAAPA…KKKEAFKKTE (144 aa)) are disordered. Residues 124–150 (AAPAEEPVAAAVKPASEPPVVQKAPVA) show a composition bias toward low complexity. Composition is skewed to basic and acidic residues over residues 183 to 200 (PADR…EERI) and 252 to 261 (KKKEAFKKTE). In terms of domain architecture, tr-type G spans 383 to 552 (KRPPVVTIMG…LLQADVMDLK (170 aa)). Residues 392-399 (GHVDHGKT) are G1. Residue 392–399 (GHVDHGKT) participates in GTP binding. Residues 417–421 (GITQH) are G2. The G3 stretch occupies residues 438 to 441 (DTPG). GTP contacts are provided by residues 438-442 (DTPGH) and 492-495 (NKID). Residues 492 to 495 (NKID) are G4. The interval 528–530 (SAK) is G5.

Belongs to the TRAFAC class translation factor GTPase superfamily. Classic translation factor GTPase family. IF-2 subfamily.

The protein resides in the cytoplasm. One of the essential components for the initiation of protein synthesis. Protects formylmethionyl-tRNA from spontaneous hydrolysis and promotes its binding to the 30S ribosomal subunits. Also involved in the hydrolysis of GTP during the formation of the 70S ribosomal complex. This is Translation initiation factor IF-2 from Geobacter sulfurreducens (strain ATCC 51573 / DSM 12127 / PCA).